Reading from the N-terminus, the 340-residue chain is Phosphoribosylformylglycinamidine cyclo-ligase (340 aa).

The protein belongs to the AIR synthase family.

It localises to the cytoplasm. It carries out the reaction 2-formamido-N(1)-(5-O-phospho-beta-D-ribosyl)acetamidine + ATP = 5-amino-1-(5-phospho-beta-D-ribosyl)imidazole + ADP + phosphate + H(+). Its pathway is purine metabolism; IMP biosynthesis via de novo pathway; 5-amino-1-(5-phospho-D-ribosyl)imidazole from N(2)-formyl-N(1)-(5-phospho-D-ribosyl)glycinamide: step 2/2. This chain is Phosphoribosylformylglycinamidine cyclo-ligase, found in Streptococcus uberis (strain ATCC BAA-854 / 0140J).